A 223-amino-acid chain; its full sequence is Flagellar L-ring protein 2 (223 aa).

The N-terminal stretch at 1 to 17 is a signal peptide; the sequence is MKWLSKSWAVAVVLLVG. Cys18 carries the N-palmitoyl cysteine lipid modification. Cys18 carries the S-diacylglycerol cysteine lipid modification.

Belongs to the FlgH family. The basal body constitutes a major portion of the flagellar organelle and consists of four rings (L,P,S, and M) mounted on a central rod.

It is found in the cell outer membrane. The protein resides in the bacterial flagellum basal body. Assembles around the rod to form the L-ring and probably protects the motor/basal body from shearing forces during rotation. This chain is Flagellar L-ring protein 2, found in Vibrio parahaemolyticus serotype O3:K6 (strain RIMD 2210633).